The sequence spans 134 residues: Natriuretic peptides B (134 aa).

Positions 1–26 are cleaved as a signal peptide; the sequence is MDPQTAPSRALLLLLFLHLAFLGGRS. O-linked (Xyl...) (chondroitin sulfate) serine glycosylation is present at Ser41. Thr62 is a glycosylation site (O-linked (HexNAc...) threonine; Partial). Ser63 and Ser70 each carry an O-linked (HexNAc...) serine glycan. An O-linked (HexNAc...) threonine glycan is attached at Thr74. A glycan (O-linked (HexNAc...) serine) is linked at Ser79. O-linked (HexNAc...) threonine; Partial glycosylation is present at Thr84. Thr97 is a glycosylation site (O-linked (HexNAc...) threonine). Cys112 and Cys128 form a disulfide bridge.

This sequence belongs to the natriuretic peptide family. Post-translationally, the precursor molecule is proteolytically cleaved by the endoproteases FURIN or CORIN at Arg-102 to produce brain natriuretic peptide 32 and NT-proBNP. This likely occurs after it has been secreted into the blood, either during circulation or in the target cells. CORIN also cleaves the precursor molecule at additional residues including Arg-99 and possibly Lys-105. In patients with heart failure, processing and degradation of natriuretic peptides B occurs but is delayed, possibly due to a decrease in enzyme level or activity of CORIN and DPP4. In terms of processing, undergoes further proteolytic cleavage by various proteases such as DPP4, MME and possibly FAP, to give rise to a variety of shorter peptides. Cleaved at Pro-104 by the prolyl endopeptidase FAP (seprase) activity (in vitro). Degraded by IDE. During IDE degradation, the resulting products initially increase the activation of NPR1 and can also stimulate NPR2 to produce cGMP before the fragments are completely degraded and inactivated by IDE (in vitro). O-glycosylated on at least seven residues. In cardiomyocytes, glycosylation at Thr-97 is essential for the stability and processing of the extracellular natriuretic peptides B. Glycosylation, especially at Thr-97, may also be important for brain natriuretic peptide 32 stability and/or extracellular distribution. Glycosylation at Thr-97 appears to inhibit FURIN- or CORIN-mediated proteolytic processing, at least in HEK293 cells. Detected in the cardiac atria (at protein level). Detected in the kidney distal tubular cells (at protein level).

The protein resides in the secreted. Its function is as follows. Cardiac hormone that plays a key role in mediating cardio-renal homeostasis. May also function as a paracrine antifibrotic factor in the heart. Acts by specifically binding and stimulating NPR1 to produce cGMP, which in turn activates effector proteins that drive various biological responses. Involved in regulating the extracellular fluid volume and maintaining the fluid-electrolyte balance through natriuresis, diuresis, vasorelaxation, and inhibition of renin and aldosterone secretion. Binds the clearance receptor NPR3. Functionally, may affect cardio-renal homeostasis. Able to promote the production of cGMP although its potency is very low compared to brain natriuretic peptide 32. In terms of biological role, may have a role in cardio-renal homeostasis. Able to promote the production of cGMP. In Homo sapiens (Human), this protein is Natriuretic peptides B (NPPB).